The sequence spans 353 residues: Uroporphyrinogen decarboxylase (353 aa).

Substrate-binding positions include 35–39, F54, D84, Y160, S215, and H329; that span reads RQAGR.

This sequence belongs to the uroporphyrinogen decarboxylase family. Homodimer.

It localises to the cytoplasm. The enzyme catalyses uroporphyrinogen III + 4 H(+) = coproporphyrinogen III + 4 CO2. It functions in the pathway porphyrin-containing compound metabolism; protoporphyrin-IX biosynthesis; coproporphyrinogen-III from 5-aminolevulinate: step 4/4. Catalyzes the decarboxylation of four acetate groups of uroporphyrinogen-III to yield coproporphyrinogen-III. The protein is Uroporphyrinogen decarboxylase of Staphylococcus epidermidis (strain ATCC 12228 / FDA PCI 1200).